The sequence spans 228 residues: UPF0173 metal-dependent hydrolase Dred_1740 (228 aa).

Belongs to the UPF0173 family.

The sequence is that of UPF0173 metal-dependent hydrolase Dred_1740 from Desulforamulus reducens (strain ATCC BAA-1160 / DSM 100696 / MI-1) (Desulfotomaculum reducens).